We begin with the raw amino-acid sequence, 92 residues long: uncharacterized protein (92 aa).

This is an uncharacterized protein from Mycobacterium tuberculosis (strain CDC 1551 / Oshkosh).